A 645-amino-acid polypeptide reads, in one-letter code: Chlorophyllide a oxygenase, chloroplastic (645 aa).

Positions 1-46 (MLPASLQRKAAAVGGRGPTNQSRVAVRVSAQPKEAPPASTPIVEDP) are disordered. A coiled-coil region spans residues 105-218 (QARQKLEYLR…RKASDLDIKE (114 aa)). Residues 258–287 (ATTVTQEVPSTSYGTPVDRAPRRSKAAIRR) are disordered. The span at 259-271 (TTVTQEVPSTSYG) shows a compositional bias: polar residues. The Rieske domain occupies 305-406 (WYPAEFSARL…CAEKDGFIWV (102 aa)). Positions 346, 348, 365, and 368 each coordinate [2Fe-2S] cluster. Residues Glu-446, Asp-450, His-453, and His-458 each coordinate Fe cation.

The protein resides in the plastid. The protein localises to the chloroplast inner membrane. It localises to the chloroplast thylakoid membrane. It catalyses the reaction chlorophyllide a + 2 NADPH + 2 O2 + 2 H(+) = chlorophyllide b + 2 NADP(+) + 3 H2O. In terms of biological role, catalyzes a two-step oxygenase reaction involved in the synthesis of chlorophyll b. Acts specifically on the non-esterified chlorophyllide a and not on chlorophyll a. In Chlamydomonas reinhardtii (Chlamydomonas smithii), this protein is Chlorophyllide a oxygenase, chloroplastic (CAO).